The primary structure comprises 159 residues: Small ribosomal subunit protein uS9 (159 aa).

Belongs to the universal ribosomal protein uS9 family.

This is Small ribosomal subunit protein uS9 from Rickettsia rickettsii (strain Iowa).